The primary structure comprises 397 residues: Ubiquitin-like modifier-activating enzyme 5 (397 aa).

Glycine 76, aspartate 97, lysine 120, asparagine 143, and asparagine 177 together coordinate ATP. Zn(2+)-binding residues include cysteine 219 and cysteine 222. Cysteine 243 (glycyl thioester intermediate) is an active-site residue. The Zn(2+) site is built by cysteine 296 and cysteine 301. The tract at residues 343–384 is disordered; sequence PSDAPTDLSQSTDVGQGLRLAYEAPEKSSAEATQAATAPVDD.

Belongs to the ubiquitin-activating E1 family. UBA5 subfamily.

In terms of biological role, E1-like enzyme which activates UFM1. This chain is Ubiquitin-like modifier-activating enzyme 5, found in Drosophila pseudoobscura pseudoobscura (Fruit fly).